The primary structure comprises 216 residues: DDB1- and CUL4-associated factor 16 (216 aa).

A disordered region spans residues Met-1–Met-42. Over residues Ser-29–Ser-41 the composition is skewed to acidic residues. Lys-61 carries the N6-acetyllysine modification.

As to quaternary structure, interacts with DDB1 and CUL4A.

The protein localises to the nucleus. It functions in the pathway protein modification; protein ubiquitination. In terms of biological role, functions as a substrate recognition component for CUL4-DDB1 E3 ubiquitin-protein ligase complex, which mediates ubiquitination and proteasome-dependent degradation of nuclear proteins. The sequence is that of DDB1- and CUL4-associated factor 16 from Homo sapiens (Human).